The chain runs to 387 residues: Putative ribosomal RNA large subunit methyltransferase MJ1649 (387 aa).

A PUA domain is found at 5–81 (LIKLEIDRRA…EEIDYDFFYK (77 aa)).

This sequence belongs to the methyltransferase superfamily. RlmI family.

Its subcellular location is the cytoplasm. The polypeptide is Putative ribosomal RNA large subunit methyltransferase MJ1649 (Methanocaldococcus jannaschii (strain ATCC 43067 / DSM 2661 / JAL-1 / JCM 10045 / NBRC 100440) (Methanococcus jannaschii)).